We begin with the raw amino-acid sequence, 511 residues long: 2,3-bisphosphoglycerate-independent phosphoglycerate mutase (511 aa).

A Mn(2+)-binding site is contributed by aspartate 12. A Phosphotyrosine modification is found at tyrosine 36. A Mn(2+)-binding site is contributed by serine 62. The Phosphoserine intermediate role is filled by serine 62. Substrate is bound by residues histidine 123, 153–154 (RD), arginine 185, arginine 191, 261–264 (RPDR), and lysine 336. 5 residues coordinate Mn(2+): aspartate 403, histidine 407, aspartate 444, histidine 445, and histidine 462.

It belongs to the BPG-independent phosphoglycerate mutase family. Monomer. Mn(2+) serves as cofactor.

The enzyme catalyses (2R)-2-phosphoglycerate = (2R)-3-phosphoglycerate. It functions in the pathway carbohydrate degradation; glycolysis; pyruvate from D-glyceraldehyde 3-phosphate: step 3/5. In terms of biological role, catalyzes the interconversion of 2-phosphoglycerate and 3-phosphoglycerate. The sequence is that of 2,3-bisphosphoglycerate-independent phosphoglycerate mutase from Geobacillus thermodenitrificans (strain NG80-2).